The chain runs to 355 residues: Cyanide hydratase (355 aa).

A CN hydrolase domain is found at 6–286; the sequence is YKAAAVTSEP…GLLFVDIDLN (281 aa). Glutamate 46 (proton acceptor) is an active-site residue. Lysine 128 is an active-site residue. Cysteine 163 acts as the Nucleophile in catalysis.

It belongs to the carbon-nitrogen hydrolase superfamily. Nitrilase family. Oligomer of dimers, forming left-handed helical fibers.

It catalyses the reaction formamide = hydrogen cyanide + H2O. Functionally, catalyzes the hydration of cyanide to formamide. Degradation of cyanide may be important for plant pathogenic fungi in infection of cyanogenic plants. Also has low but significant nitrilase activity with acetonitrile, propionitrile and benzonitrile. This chain is Cyanide hydratase, found in Gibberella baccata (Fusarium lateritium).